A 261-amino-acid polypeptide reads, in one-letter code: Glucosamine-6-phosphate deaminase (261 aa).

D67 acts as the Proton acceptor; for enolization step in catalysis. The active-site For ring-opening step is the D136. The active-site Proton acceptor; for ring-opening step is the H138. E143 (for ring-opening step) is an active-site residue.

It belongs to the glucosamine/galactosamine-6-phosphate isomerase family. NagB subfamily.

It catalyses the reaction alpha-D-glucosamine 6-phosphate + H2O = beta-D-fructose 6-phosphate + NH4(+). The protein operates within amino-sugar metabolism; N-acetylneuraminate degradation; D-fructose 6-phosphate from N-acetylneuraminate: step 5/5. In terms of biological role, catalyzes the reversible isomerization-deamination of glucosamine 6-phosphate (GlcN6P) to form fructose 6-phosphate (Fru6P) and ammonium ion. In Mycolicibacterium smegmatis (strain ATCC 700084 / mc(2)155) (Mycobacterium smegmatis), this protein is Glucosamine-6-phosphate deaminase.